The chain runs to 745 residues: 5-methyltetrahydropteroyltriglutamate--homocysteine methyltransferase (745 aa).

2 residues coordinate 5-methyltetrahydropteroyltri-L-glutamate: Lys19 and Asn115. Residues 420-422 (IGS) and Glu473 each bind L-homocysteine. L-methionine is bound by residues 420-422 (IGS) and Glu473. 5-methyltetrahydropteroyltri-L-glutamate-binding positions include Asp478, Tyr501, 504–505 (RA), and Trp550. Asp588 is an L-homocysteine binding site. Asp588 is an L-methionine binding site. His630, Cys632, and Glu654 together coordinate Zn(2+). The active-site Proton donor is the His683. Cys715 lines the Zn(2+) pocket.

It belongs to the vitamin-B12 independent methionine synthase family. It depends on Zn(2+) as a cofactor.

It catalyses the reaction 5-methyltetrahydropteroyltri-L-glutamate + L-homocysteine = tetrahydropteroyltri-L-glutamate + L-methionine. It participates in amino-acid biosynthesis; L-methionine biosynthesis via de novo pathway; L-methionine from L-homocysteine (MetE route): step 1/1. Its function is as follows. Catalyzes the transfer of a methyl group from 5-methyltetrahydrofolate to homocysteine resulting in methionine formation. This Streptococcus mutans serotype c (strain ATCC 700610 / UA159) protein is 5-methyltetrahydropteroyltriglutamate--homocysteine methyltransferase.